The sequence spans 365 residues: Peptide chain release factor 2 (365 aa).

At glutamine 252 the chain carries N5-methylglutamine.

Belongs to the prokaryotic/mitochondrial release factor family. Methylated by PrmC. Methylation increases the termination efficiency of RF2.

It is found in the cytoplasm. Its function is as follows. Peptide chain release factor 2 directs the termination of translation in response to the peptide chain termination codons UGA and UAA. This is Peptide chain release factor 2 from Escherichia coli O8 (strain IAI1).